A 208-amino-acid polypeptide reads, in one-letter code: Ribosomal RNA large subunit methyltransferase E (208 aa).

5 residues coordinate S-adenosyl-L-methionine: Gly-62, Trp-64, Asp-82, Asp-98, and Asp-123. Lys-163 acts as the Proton acceptor in catalysis.

The protein belongs to the class I-like SAM-binding methyltransferase superfamily. RNA methyltransferase RlmE family.

It localises to the cytoplasm. It catalyses the reaction uridine(2552) in 23S rRNA + S-adenosyl-L-methionine = 2'-O-methyluridine(2552) in 23S rRNA + S-adenosyl-L-homocysteine + H(+). In terms of biological role, specifically methylates the uridine in position 2552 of 23S rRNA at the 2'-O position of the ribose in the fully assembled 50S ribosomal subunit. This Actinobacillus pleuropneumoniae serotype 5b (strain L20) protein is Ribosomal RNA large subunit methyltransferase E.